Reading from the N-terminus, the 483-residue chain is GTPase Der (483 aa).

2 EngA-type G domains span residues 3 to 167 and 212 to 387; these read FTLA…GEER and LRIA…EIWN. Residues 9 to 16, 56 to 60, 119 to 122, 218 to 225, 265 to 269, and 330 to 333 contribute to the GTP site; these read GRPNVGKS, DTAGL, NKAE, GRPNAGKS, DTAGM, and NKWD. One can recognise a KH-like domain in the interval 388–472; the sequence is RRISTGRLNR…PIRLSLRTSD (85 aa).

It belongs to the TRAFAC class TrmE-Era-EngA-EngB-Septin-like GTPase superfamily. EngA (Der) GTPase family. As to quaternary structure, associates with the 50S ribosomal subunit.

Its function is as follows. GTPase that plays an essential role in the late steps of ribosome biogenesis. This chain is GTPase Der, found in Brucella suis (strain ATCC 23445 / NCTC 10510).